We begin with the raw amino-acid sequence, 241 residues long: ATP synthase subunit 4, mitochondrial (241 aa).

A mitochondrion-targeting transit peptide spans 1–35 (MASRLARTAVGAARLRPSVVPRVLPALSTVASPRY).

Belongs to the eukaryotic ATPase B chain family. F-type ATPases have 2 components, CF(1) - the catalytic core - and CF(0) - the membrane proton channel. In yeast, the dimeric form of ATP synthase consists of 17 polypeptides: alpha, beta, gamma, delta, epsilon, 4 (B), 5 (OSCP), 6 (A), 8, 9 (C), d, E (Tim11), f, g, h, i/j and k.

It is found in the mitochondrion. It localises to the mitochondrion inner membrane. In terms of biological role, mitochondrial membrane ATP synthase (F(1)F(0) ATP synthase or Complex V) produces ATP from ADP in the presence of a proton gradient across the membrane which is generated by electron transport complexes of the respiratory chain. F-type ATPases consist of two structural domains, F(1) - containing the extramembraneous catalytic core, and F(0) - containing the membrane proton channel, linked together by a central stalk and a peripheral stalk. During catalysis, ATP synthesis in the catalytic domain of F(1) is coupled via a rotary mechanism of the central stalk subunits to proton translocation. Part of the complex F(0) domain and the peripheric stalk, which acts as a stator to hold the catalytic alpha(3)beta(3) subcomplex and subunit a/atp6 static relative to the rotary elements. The chain is ATP synthase subunit 4, mitochondrial (atp-3) from Neurospora crassa (strain ATCC 24698 / 74-OR23-1A / CBS 708.71 / DSM 1257 / FGSC 987).